Consider the following 317-residue polypeptide: Protein KlaC (317 aa).

In terms of biological role, belongs to the kla operon, which is associated with cryptic tellurite resistance, and IncW plasmid fertility inhibition. The chain is Protein KlaC (klaC) from Escherichia coli.